Reading from the N-terminus, the 184-residue chain is TATA-box-binding protein (184 aa).

Tandem repeats lie at residues 9–85 and 100–178.

The protein belongs to the TBP family.

In terms of biological role, general factor that plays a role in the activation of archaeal genes transcribed by RNA polymerase. Binds specifically to the TATA box promoter element which lies close to the position of transcription initiation. This is TATA-box-binding protein from Thermoplasma volcanium (strain ATCC 51530 / DSM 4299 / JCM 9571 / NBRC 15438 / GSS1).